We begin with the raw amino-acid sequence, 182 residues long: Large ribosomal subunit protein uL5 (182 aa).

The protein belongs to the universal ribosomal protein uL5 family. In terms of assembly, part of the 50S ribosomal subunit; part of the 5S rRNA/L5/L18/L25 subcomplex. Contacts the 5S rRNA and the P site tRNA. Forms a bridge to the 30S subunit in the 70S ribosome.

This is one of the proteins that bind and probably mediate the attachment of the 5S RNA into the large ribosomal subunit, where it forms part of the central protuberance. In the 70S ribosome it contacts protein S13 of the 30S subunit (bridge B1b), connecting the 2 subunits; this bridge is implicated in subunit movement. Contacts the P site tRNA; the 5S rRNA and some of its associated proteins might help stabilize positioning of ribosome-bound tRNAs. This chain is Large ribosomal subunit protein uL5, found in Borrelia turicatae (strain 91E135).